The chain runs to 123 residues: uncharacterized protein (123 aa).

3 consecutive transmembrane segments (helical) span residues 7–29, 44–66, and 79–101; these read VKHLIIAGFSAAILSFLISFDAV, FFIHSFLLIGLPLALFTDAVHRI, and LGLYATVVYVSWDSAVWLAAAMA.

It is found in the cell membrane. This is an uncharacterized protein from Bacillus subtilis (strain 168).